The chain runs to 61 residues: UPF0434 protein Sama_1339 (61 aa).

It belongs to the UPF0434 family.

This is UPF0434 protein Sama_1339 from Shewanella amazonensis (strain ATCC BAA-1098 / SB2B).